Here is a 210-residue protein sequence, read N- to C-terminus: Glutathione S-transferase P (210 aa).

The region spanning 2 to 81 (ASYTIVYFPV…HLGRTLGLYG (80 aa)) is the GST N-terminal domain. Residue Tyr-4 is modified to Phosphotyrosine; by EGFR. Glutathione contacts are provided by residues Tyr-8, Arg-14, Trp-39, Lys-45, and 52 to 53 (QL). Thr-62 is subject to Phosphothreonine. 65–66 (QS) lines the glutathione pocket. The GST C-terminal domain maps to 83–204 (DQREAALVDM…ASPEHVNRPI (122 aa)). 2 positions are modified to N6-succinyllysine: Lys-103 and Lys-116. The residue at position 128 (Lys-128) is an N6-acetyllysine.

The protein belongs to the GST superfamily. Pi family. As to quaternary structure, homodimer. Interacts with CDK5.

It localises to the cytoplasm. The protein localises to the mitochondrion. It is found in the nucleus. The enzyme catalyses RX + glutathione = an S-substituted glutathione + a halide anion + H(+). The catalysed reaction is prostaglandin J2 + glutathione = prostaglandin J2-S-(R)-glutathione. It catalyses the reaction prostaglandin J2 + glutathione = prostaglandin J2-S-(S)-glutathione. It carries out the reaction prostaglandin A2 + glutathione = prostaglandin A2-S-(S)-glutathione. The enzyme catalyses 11(S)-hydroxy-14(S),15(S)-epoxy-(5Z,8Z,12E)-eicosatrienoate + glutathione = (11S,15S)-dihydroxy-14(R)-S-glutathionyl-(5Z,8Z,12E)-eicosatrienoate. In terms of biological role, conjugation of reduced glutathione to a wide number of exogenous and endogenous hydrophobic electrophiles. Involved in the formation of glutathione conjugates of both prostaglandin A2 (PGA2) and prostaglandin J2 (PGJ2). Participates in the formation of novel hepoxilin regioisomers. Negatively regulates CDK5 activity via p25/p35 translocation to prevent neurodegeneration. The protein is Glutathione S-transferase P (GSTP1) of Capra hircus (Goat).